The following is a 287-amino-acid chain: 1-acyl-sn-glycerol-3-phosphate acyltransferase alpha (287 aa).

The N-terminal stretch at 1–26 (MELWPGAGTLLLLLFLLLLLLLPTLW) is a signal peptide. The Lumenal segment spans residues 27-37 (FCSPSAKYFFK). A helical transmembrane segment spans residues 38 to 58 (MAFYNGWILFLAVLAIPVCAV). The Cytoplasmic segment spans residues 59–127 (RGRNVENMKI…PGRCVPIAKR (69 aa)). Positions 104 to 109 (HQSSLD) match the HXXXXD motif motif. A helical membrane pass occupies residues 128-148 (ELLWAGSAGLACWLAGVIFID). Over 149-287 (RKRTGDAISV…KPGGVGEAGL (139 aa)) the chain is Lumenal. The EGTR motif signature appears at 178 to 181 (EGTR).

This sequence belongs to the 1-acyl-sn-glycerol-3-phosphate acyltransferase family.

The protein localises to the endoplasmic reticulum membrane. The enzyme catalyses a 1-acyl-sn-glycero-3-phosphate + an acyl-CoA = a 1,2-diacyl-sn-glycero-3-phosphate + CoA. It carries out the reaction 1-(9Z-octadecenoyl)-sn-glycero-3-phosphate + (9Z)-octadecenoyl-CoA = 1,2-di-(9Z-octadecenoyl)-sn-glycero-3-phosphate + CoA. The catalysed reaction is 1-(9Z-octadecenoyl)-sn-glycero-3-phosphate + hexadecanoyl-CoA = 1-(9Z)-octadecenoyl-2-hexadecanoyl-sn-glycero-3-phosphate + CoA. It catalyses the reaction heptadecanoyl-CoA + 1-(9Z-octadecenoyl)-sn-glycero-3-phosphate = 1-(9Z)-octadecenoyl-2-heptadecanoyl-sn-glycero-3-phosphate + CoA. The enzyme catalyses 1-(9Z-octadecenoyl)-sn-glycero-3-phosphate + octadecanoyl-CoA = 1-(9Z-octadecenoyl)-2-octadecanoyl-sn-glycero-3-phosphate + CoA. It carries out the reaction 1-(9Z-octadecenoyl)-sn-glycero-3-phosphate + (9Z,12Z)-octadecadienoyl-CoA = 1-(9Z)-octadecenoyl-2-(9Z,12Z)-octadecadienoyl-sn-glycero-3-phosphate + CoA. The catalysed reaction is 1-(9Z-octadecenoyl)-sn-glycero-3-phosphate + tetradecanoyl-CoA = 1-(9Z)-octadecenoyl-2-tetradecanoyl-sn-glycero-3-phosphate + CoA. It catalyses the reaction pentadecanoyl-CoA + 1-(9Z-octadecenoyl)-sn-glycero-3-phosphate = 1-(9Z)-octadecenoyl-2-pentadecanoyl-sn-glycero-3-phosphate + CoA. The enzyme catalyses 1-hexadecanoyl-sn-glycero-3-phosphate + (9Z)-octadecenoyl-CoA = 1-hexadecanoyl-2-(9Z-octadecenoyl)-sn-glycero-3-phosphate + CoA. It carries out the reaction 1-(9Z,12Z,15Z)-octadecatrienoyl-sn-glycero-3-phosphate + (9Z)-octadecenoyl-CoA = 1-(9Z,12Z,15Z)-octadecatrienoyl-2-(9Z)-octadecenoyl-sn-glycero-3-phosphate + CoA. The catalysed reaction is 1-(6Z,9Z,12Z-octadecatrienoyl)-sn-glycero-3-phosphate + (9Z)-octadecenoyl-CoA = (6Z,9Z,12Z)-octadecatrienoyl-2-(9Z)-octadecenoyl-sn-glycero-3-phosphate + CoA. It catalyses the reaction 1-eicosanoyl-sn-glycero-3-phosphate + (9Z)-octadecenoyl-CoA = 1-eicosanoyl-2-(9Z)-octadecenoyl-sn-glycero-3-phosphate + CoA. The enzyme catalyses 1-tetradecanoyl-sn-glycerol 3-phosphate + (9Z)-octadecenoyl-CoA = 1-tetradecanoyl-2-(9Z)-octadecenoyl-sn-glycero-3-phosphate + CoA. It carries out the reaction 1-(9Z-octadecenoyl)-sn-glycero-3-phosphate + (5Z,8Z,11Z,14Z)-eicosatetraenoyl-CoA = 1-(9Z)-octadecenoyl-2-(5Z,8Z,11Z,14Z)-eicosatetraenoyl-sn-glycero-3-phosphate + CoA. The catalysed reaction is 1-(9Z-octadecenoyl)-sn-glycero-3-phosphate + dodecanoyl-CoA = 1-(9Z)-octadecenoyl-2-dodecanoyl-sn-glycero-3-phosphate + CoA. It catalyses the reaction (6Z)-octadecenoyl-CoA + 1-(9Z-octadecenoyl)-sn-glycero-3-phosphate = 1-(9Z)-octadecenoyl-2-(6Z)-octadecenoyl-sn-glycero-3-phosphate + CoA. The enzyme catalyses (11Z)-octadecenoyl-CoA + 1-(9Z-octadecenoyl)-sn-glycero-3-phosphate = 1-(9Z)-octadecenoyl-2-(11Z)-octadecenoyl-sn-glycero-3-phosphate + CoA. It carries out the reaction (9Z)-hexadecenoyl-CoA + 1-(9Z-octadecenoyl)-sn-glycero-3-phosphate = 1-(9Z-octadecenoyl)-2-(9Z-hexadecenoyl)-sn-glycero-3-phosphate + CoA. Its pathway is phospholipid metabolism; CDP-diacylglycerol biosynthesis; CDP-diacylglycerol from sn-glycerol 3-phosphate: step 2/3. Its function is as follows. Converts 1-acyl-sn-glycerol-3-phosphate (lysophosphatidic acid or LPA) into 1,2-diacyl-sn-glycerol-3-phosphate (phosphatidic acid or PA) by incorporating an acyl moiety at the sn-2 position of the glycerol backbone. In Bos taurus (Bovine), this protein is 1-acyl-sn-glycerol-3-phosphate acyltransferase alpha (AGPAT1).